A 305-amino-acid polypeptide reads, in one-letter code: Virulence plasmid integrase pGP7-D (305 aa).

Positions 13-99 constitute a Core-binding (CB) domain; the sequence is LTFGEASEIW…CYISFTKFLY (87 aa). One can recognise a Tyr recombinase domain in the interval 127–303; that stretch reads VKTVSISKKE…GNSSVANIPT (177 aa). Residues Lys-188 and Arg-257 contribute to the active site. The active-site O-(3'-phospho-DNA)-tyrosine intermediate is the Tyr-289.

It belongs to the 'phage' integrase family.

The sequence is that of Virulence plasmid integrase pGP7-D from Chlamydia muridarum (strain MoPn / Nigg).